The primary structure comprises 318 residues: Probable serine/threonine-protein kinase MRK1 homolog (318 aa).

Residues 40–313 enclose the Protein kinase domain; that stretch reads YRYVEMIGRG…ASELLRKQFF (274 aa). ATP is bound by residues 46-54 and K68; that span reads IGRGSFGVV. D159 functions as the Proton acceptor in the catalytic mechanism.

This sequence belongs to the protein kinase superfamily. CMGC Ser/Thr protein kinase family. GSK-3 subfamily.

It localises to the cytoplasm. The protein resides in the nucleus. The catalysed reaction is L-seryl-[protein] + ATP = O-phospho-L-seryl-[protein] + ADP + H(+). It catalyses the reaction L-threonyl-[protein] + ATP = O-phospho-L-threonyl-[protein] + ADP + H(+). Its function is as follows. May play a role in the initiation and completion of mitosis. This Encephalitozoon cuniculi (strain GB-M1) (Microsporidian parasite) protein is Probable serine/threonine-protein kinase MRK1 homolog (MRK1).